The following is a 186-amino-acid chain: Mitoferrin-2A (186 aa).

The stretch at 75 to 163 is one Solcar repeat; the sequence is SNVTTHMLAG…FACYEKLKKT (89 aa). Transmembrane regions (helical) follow at residues 77-96, 137-157, and 172-185; these read VTTHMLAGAVAGVMEHCLMY, RGLNVTATGAGPAHALYFACY, and GNSHIANGTDYSCP.

It belongs to the mitochondrial carrier (TC 2.A.29) family.

Its subcellular location is the mitochondrion inner membrane. It carries out the reaction Fe(2+)(in) = Fe(2+)(out). Mitochondrial iron transporter that mediates iron uptake. Probably required for heme synthesis of hemoproteins and Fe-S cluster assembly in non-erythroid cells. The sequence is that of Mitoferrin-2A (slc25a28-a) from Xenopus laevis (African clawed frog).